The sequence spans 248 residues: Pathogenesis-related thaumatin-like protein 3.4 (248 aa).

Residues 1 to 25 (MARAILWVLLTVMAVSLLLHAGVEG) form the signal peptide. Cystine bridges form between Cys-34–Cys-227, Cys-75–Cys-85, Cys-90–Cys-96, Cys-141–Cys-216, Cys-146–Cys-199, Cys-154–Cys-164, Cys-168–Cys-177, and Cys-178–Cys-186. Asn-235 carries N-linked (GlcNAc...) asparagine glycosylation.

Belongs to the thaumatin family. As to expression, mainly expressed in male and female strobili, and, at lower levels, in roots of seedlings and saplings.

Its function is as follows. May be involved in disease resistance. This Cryptomeria japonica (Japanese cedar) protein is Pathogenesis-related thaumatin-like protein 3.4.